The chain runs to 62 residues: Phycobilisome degradation protein NblA homolog 1 (62 aa).

It to Synechococcus PCC 7942 NblA and some, to chloroplast ycf18.

The sequence is that of Phycobilisome degradation protein NblA homolog 1 from Synechocystis sp. (strain ATCC 27184 / PCC 6803 / Kazusa).